The chain runs to 323 residues: 4-diphosphocytidyl-2-C-methyl-D-erythritol kinase (323 aa).

K25 is an active-site residue. 110 to 120 (PVAGGMAGGSA) contacts ATP. Residue D152 is part of the active site.

Belongs to the GHMP kinase family. IspE subfamily.

The enzyme catalyses 4-CDP-2-C-methyl-D-erythritol + ATP = 4-CDP-2-C-methyl-D-erythritol 2-phosphate + ADP + H(+). The protein operates within isoprenoid biosynthesis; isopentenyl diphosphate biosynthesis via DXP pathway; isopentenyl diphosphate from 1-deoxy-D-xylulose 5-phosphate: step 3/6. Catalyzes the phosphorylation of the position 2 hydroxy group of 4-diphosphocytidyl-2C-methyl-D-erythritol. The sequence is that of 4-diphosphocytidyl-2-C-methyl-D-erythritol kinase from Mycobacterium leprae (strain Br4923).